The chain runs to 115 residues: Cytochrome c (115 aa).

Positions 26, 29, 30, and 91 each coordinate heme c.

This sequence belongs to the cytochrome c family. Binds 1 heme c group covalently per subunit.

The protein resides in the mitochondrion intermembrane space. Its function is as follows. Electron carrier protein. The oxidized form of the cytochrome c heme group can accept an electron from the heme group of the cytochrome c1 subunit of cytochrome reductase. Cytochrome c then transfers this electron to the cytochrome oxidase complex, the final protein carrier in the mitochondrial electron-transport chain. In Theileria annulata, this protein is Cytochrome c.